Reading from the N-terminus, the 448-residue chain is Probable glycine dehydrogenase (decarboxylating) subunit 1 (448 aa).

It belongs to the GcvP family. N-terminal subunit subfamily. In terms of assembly, the glycine cleavage system is composed of four proteins: P, T, L and H. In this organism, the P 'protein' is a heterodimer of two subunits.

The enzyme catalyses N(6)-[(R)-lipoyl]-L-lysyl-[glycine-cleavage complex H protein] + glycine + H(+) = N(6)-[(R)-S(8)-aminomethyldihydrolipoyl]-L-lysyl-[glycine-cleavage complex H protein] + CO2. Functionally, the glycine cleavage system catalyzes the degradation of glycine. The P protein binds the alpha-amino group of glycine through its pyridoxal phosphate cofactor; CO(2) is released and the remaining methylamine moiety is then transferred to the lipoamide cofactor of the H protein. This chain is Probable glycine dehydrogenase (decarboxylating) subunit 1, found in Listeria innocua serovar 6a (strain ATCC BAA-680 / CLIP 11262).